Consider the following 370-residue polypeptide: Prolactin-releasing peptide receptor (370 aa).

The interval 1-34 (MTSLPPGTTGDPDLFSGPSPAGSTPANQSAEASE) is disordered. Topologically, residues 1-62 (MTSLPPGTTG…LQLVHQLKGL (62 aa)) are extracellular. Over residues 21–34 (AGSTPANQSAEASE) the composition is skewed to polar residues. 2 N-linked (GlcNAc...) asparagine glycosylation sites follow: N27 and N36. A helical membrane pass occupies residues 63–83 (IVMLYSIVVVVGLVGNCLLVL). Over 84–101 (VIARVRRLHNVTNFLIGN) the chain is Cytoplasmic. Residues 102–122 (LALSDVLMCAACVPLTLAYAF) traverse the membrane as a helical segment. The Extracellular segment spans residues 123-126 (EPRG). The helical transmembrane segment at 127 to 147 (WVFGGGLCHLVFFLQPVTVYV) threads the bilayer. A disulfide bond links C134 and C211. Topologically, residues 148-175 (SVFTLTTIAVDRYVVLVHPLRRRISLKL) are cytoplasmic. A helical transmembrane segment spans residues 176 to 196 (SAYAVLGIWALSAVLALPAAV). Residues 197–223 (HTYHVELKPHDVRLCEEFWGSQERQRQ) lie on the Extracellular side of the membrane. Residues 224-244 (IYAWGLLLGTYLLPLLAILLS) traverse the membrane as a helical segment. Over 245–276 (YVRVSVKLRNRVVPGSVTQSQADWDRARRRRT) the chain is Cytoplasmic. Residues 277-297 (FCLLVVVVVVFALCWLPLHIF) form a helical membrane-spanning segment. Over 298 to 317 (NLLRDLDPRAIDPYAFGLVQ) the chain is Extracellular. Residues 318–338 (LLCHWLAMSSACYNPFIYAWL) traverse the membrane as a helical segment. Over 339–370 (HDSFREELRKMLLSWPRKIVPHGQNMTVSVVI) the chain is Cytoplasmic. The segment at 365–370 (TVSVVI) is required for interaction with GRIP1, GRIP2 and PICK1.

It belongs to the G-protein coupled receptor 1 family. Interacts through its C-terminal region with the PDZ domain-containing proteins GRIP1, GRIP2 and PICK1. Interacts with PDZ domains 4 and 5 of GRIP1 and with the PDZ domain of PICK1. Widely expressed, with highest levels in pituitary, cerebellum, and hypothalamus.

The protein resides in the cell membrane. Its function is as follows. Receptor for prolactin-releasing peptide (PrRP). Implicated in lactation, regulation of food intake and pain-signal processing. The polypeptide is Prolactin-releasing peptide receptor (Prlhr) (Rattus norvegicus (Rat)).